We begin with the raw amino-acid sequence, 82 residues long: Small ribosomal subunit protein bS16 (82 aa).

Belongs to the bacterial ribosomal protein bS16 family.

The sequence is that of Small ribosomal subunit protein bS16 from Haemophilus ducreyi (strain 35000HP / ATCC 700724).